We begin with the raw amino-acid sequence, 144 residues long: Large ribosomal subunit protein uL16 (144 aa).

It belongs to the universal ribosomal protein uL16 family. In terms of assembly, part of the 50S ribosomal subunit.

In terms of biological role, binds 23S rRNA and is also seen to make contacts with the A and possibly P site tRNAs. This Thermoanaerobacter sp. (strain X514) protein is Large ribosomal subunit protein uL16.